A 960-amino-acid chain; its full sequence is CWF19-like protein 2 (960 aa).

4 disordered regions span residues 1–222 (MAAY…AGVV), 261–552 (EFQK…ELIL), 624–648 (AWPV…AIET), and 712–731 (AQKE…AVQE). The stretch at 13-101 (SIKSRKESKR…KKAKKEKKDE (89 aa)) forms a coiled coil. Residues 16–52 (SRKESKREERERVIQKAKEKFEKEERRKAERKARGED) show a composition bias toward basic and acidic residues. The span at 73-96 (KTKKAKKEKKAKKSKKEKKKKAKK) shows a compositional bias: basic residues. The span at 108 to 117 (SSEDSEDEWV) shows a compositional bias: acidic residues. Low complexity predominate over residues 135–146 (EATPSSSSASNN). Positions 163–279 (SVADRRAQKE…EDAAYGERRD (117 aa)) form a coiled coil. Composition is skewed to basic and acidic residues over residues 165–181 (ADRR…ERQK), 261–372 (EFQK…DDLS), and 404–417 (KPVD…EAGF). Residues 507-518 (SAVQDSETPTLQ) show a composition bias toward polar residues. Residues 540 to 605 (SESEEEEEEE…IKDQSKRASK (66 aa)) are a coiled coil. A compositionally biased stretch (acidic residues) spans 541–552 (ESEEEEEEELIL). Residues 713 to 731 (QKERAGRDEERQRNKAVQE) are compositionally biased toward basic and acidic residues.

The protein belongs to the CWF19 family.

This Danio rerio (Zebrafish) protein is CWF19-like protein 2 (cwf19l2).